A 735-amino-acid chain; its full sequence is Polyribonucleotide nucleotidyltransferase (735 aa).

Residues Asp-515 and Asp-521 each contribute to the Mg(2+) site. Positions 581–641 (PKLELFSVDP…KNVDAAKDYI (61 aa)) constitute a KH domain. Positions 649–671 (NSRGFGKKPHGHDRRDKDRQKPT) are disordered. One can recognise an S1 motif domain in the interval 675 to 734 (GDEFDGVVKSVVDFGAFIELKDGVDGLLHISKIKTPLNVGDRLKVCVSEQKGNKISLSLV).

It belongs to the polyribonucleotide nucleotidyltransferase family. Requires Mg(2+) as cofactor.

It localises to the cytoplasm. The enzyme catalyses RNA(n+1) + phosphate = RNA(n) + a ribonucleoside 5'-diphosphate. Involved in mRNA degradation. Catalyzes the phosphorolysis of single-stranded polyribonucleotides processively in the 3'- to 5'-direction. This is Polyribonucleotide nucleotidyltransferase from Campylobacter curvus (strain 525.92).